A 339-amino-acid chain; its full sequence is DNA-directed RNA polymerase subunit alpha (339 aa).

The tract at residues 1–233 (MVREEVAGST…DLFLPFLHAE (233 aa)) is alpha N-terminal domain (alpha-NTD). Residues 264-339 (KKGIPLNCIF…IDLLKNKLSF (76 aa)) form an alpha C-terminal domain (alpha-CTD) region.

It belongs to the RNA polymerase alpha chain family. In plastids the minimal PEP RNA polymerase catalytic core is composed of four subunits: alpha, beta, beta', and beta''. When a (nuclear-encoded) sigma factor is associated with the core the holoenzyme is formed, which can initiate transcription.

It is found in the plastid. The protein localises to the chloroplast. It catalyses the reaction RNA(n) + a ribonucleoside 5'-triphosphate = RNA(n+1) + diphosphate. Its function is as follows. DNA-dependent RNA polymerase catalyzes the transcription of DNA into RNA using the four ribonucleoside triphosphates as substrates. This chain is DNA-directed RNA polymerase subunit alpha, found in Eremopyrum distans.